The sequence spans 482 residues: Glycogen synthase (482 aa).

Position 15 (K15) interacts with ADP-alpha-D-glucose.

The protein belongs to the glycosyltransferase 1 family. Bacterial/plant glycogen synthase subfamily.

It catalyses the reaction [(1-&gt;4)-alpha-D-glucosyl](n) + ADP-alpha-D-glucose = [(1-&gt;4)-alpha-D-glucosyl](n+1) + ADP + H(+). It functions in the pathway glycan biosynthesis; glycogen biosynthesis. Its function is as follows. Synthesizes alpha-1,4-glucan chains using ADP-glucose. The polypeptide is Glycogen synthase (Hydrogenobaculum sp. (strain Y04AAS1)).